We begin with the raw amino-acid sequence, 975 residues long: Glycine dehydrogenase (decarboxylating) (975 aa).

Position 723 is an N6-(pyridoxal phosphate)lysine (K723).

It belongs to the GcvP family. In terms of assembly, the glycine cleavage system is composed of four proteins: P, T, L and H. It depends on pyridoxal 5'-phosphate as a cofactor.

It catalyses the reaction N(6)-[(R)-lipoyl]-L-lysyl-[glycine-cleavage complex H protein] + glycine + H(+) = N(6)-[(R)-S(8)-aminomethyldihydrolipoyl]-L-lysyl-[glycine-cleavage complex H protein] + CO2. The glycine cleavage system catalyzes the degradation of glycine. The P protein binds the alpha-amino group of glycine through its pyridoxal phosphate cofactor; CO(2) is released and the remaining methylamine moiety is then transferred to the lipoamide cofactor of the H protein. This chain is Glycine dehydrogenase (decarboxylating), found in Burkholderia cenocepacia (strain HI2424).